The following is a 415-amino-acid chain: PRKCA-binding protein (415 aa).

Residues 22-105 (KVTLQKDAQN…EVTIHYNKLQ (84 aa)) enclose the PDZ domain. Zn(2+) is bound by residues Cys-44 and Cys-46. At Thr-82 the chain carries Phosphothreonine. Positions 144 to 357 (LCNDGLVKRL…CYAVLRDADV (214 aa)) constitute an AH domain. Residues 376–415 (EEFTDGEEEEEEEDTAAGEPSRDTRGAAGPLDKGGSWCDS) are disordered. The span at 377-391 (EFTDGEEEEEEEDTA) shows a compositional bias: acidic residues. Cys-413 carries S-palmitoyl cysteine; by DHHC8 lipidation.

In terms of assembly, monomer and homodimer. Interacts with CXADR. Interacts presynaptically with the glutamate receptors GRIA2, GRIA3, GRIK3, isoform 3 of GRIA4, isoform A of GRM4, GRM7 and GRM8; with NAPA and NAPB; and with BTG2. The interaction with NAPA and NAPB disrupts the interaction with GRIA2, conducting to the internalization of GRIA2. Interacts with PRKCA; with the amine transporters SLC6A2 and SLC6A3; with the channels ASIC1 and ASIC2; with the GTP-binding proteins ARF1 and ARF3; with the ephrin receptor tyrosine kinases EPHA7, EPHB1 and EPHB2; with ERBB2 and through its PDZ domain with the C-terminal tail of PRLHR. Interacts with UNC5A. Interacts (via AH domain) with NCS1/FREQ; in a calcium-dependent manner. Interacts with F-actin and associates with the ARP2/3 complex. Interacts (via PDZ domain) with ARF1 (activated); the interaction blocks Arp2/3 complex inhibition. Interacts with SORCS3. Phosphorylation at Thr-82 appears to inhibit the interaction with AMPA receptors. In terms of processing, palmitoylation on Cys-413 is essential for long-term synaptic depression (LTD).

It is found in the cytoplasm. The protein resides in the perinuclear region. The protein localises to the membrane. It localises to the postsynaptic density. Its subcellular location is the synapse. It is found in the synaptosome. The protein resides in the cytoskeleton. In terms of biological role, probable adapter protein that bind to and organize the subcellular localization of a variety of membrane proteins containing some PDZ recognition sequence. Involved in the clustering of various receptors, possibly by acting at the receptor internalization level. Plays a role in synaptic plasticity by regulating the trafficking and internalization of AMPA receptors. May be regulated upon PRKCA activation. May regulate ASIC1/ASIC3 channel. Regulates actin polymerization by inhibiting the actin-nucleating activity of the Arp2/3 complex; the function is competitive with nucleation promoting factors and is linked to neuronal morphology regulation and AMPA receptor (AMPAR) endocytosis. Via interaction with the Arp2/3 complex involved in regulation of synaptic plasicity of excitatory synapses and required for spine shrinkage during long-term depression (LTD). Involved in regulation of astrocyte morphology, antagonistic to Arp2/3 complex activator WASL/N-WASP function. In Macaca fascicularis (Crab-eating macaque), this protein is PRKCA-binding protein (PICK1).